Here is a 177-residue protein sequence, read N- to C-terminus: Large ribosomal subunit protein uL6 (177 aa).

Belongs to the universal ribosomal protein uL6 family. In terms of assembly, part of the 50S ribosomal subunit.

In terms of biological role, this protein binds to the 23S rRNA, and is important in its secondary structure. It is located near the subunit interface in the base of the L7/L12 stalk, and near the tRNA binding site of the peptidyltransferase center. The polypeptide is Large ribosomal subunit protein uL6 (Aliivibrio salmonicida (strain LFI1238) (Vibrio salmonicida (strain LFI1238))).